A 117-amino-acid polypeptide reads, in one-letter code: Appetite-regulating hormone (117 aa).

Residues 1–23 form the signal peptide; it reads MVSSATICSLLLLSMLWMDMAMA. Ser26 carries O-decanoyl serine; alternate lipidation. Ser26 is lipidated: O-hexanoyl serine; alternate. A lipid anchor (O-octanoyl serine; alternate) is attached at Ser26. Residues 28-68 form a disordered region; it reads LSPEHQKAQQRKESKKPPAKLQPRALEGWLHPEDRGQAEEA. Residues 31–43 show a composition bias toward basic and acidic residues; sequence EHQKAQQRKESKK. Residues 52 to 75 constitute a propeptide, removed in mature form; sequence ALEGWLHPEDRGQAEEAEEELEIR. Leu98 bears the Leucine amide mark. A propeptide spans 99–117 (removed in mature form); sequence GKFLQDILWEEVKEAPANK.

The protein belongs to the motilin family. In terms of processing, O-octanoylated by GOAT/MBOAT4. O-octanoylation is essential for ghrelin activity. The replacement of Ser-26 by aromatic tryptophan preserves ghrelin activity. Post-translationally, amidation of Leu-98 is essential for obestatin activity. As to expression, ghrelin is broadly expressed with higher expression in the stomach. Very low levels are detected in the hypothalamus, heart, lung, pancreas, intestine and adipose tissue. Obestatin is most highly expressed in jejunum, and also found in duodenum, stomach, pituitary, ileum, liver, hypothalamus and heart. Expressed in low levels in pancreas, cerebellum, cerebrum, kidney, testis, ovary colon and lung.

It is found in the secreted. Its function is as follows. Ghrelin is the ligand for growth hormone secretagogue receptor type 1 (GHSR). Induces the release of growth hormone from the pituitary. Has an appetite-stimulating effect, induces adiposity and stimulates gastric acid secretion. Involved in growth regulation. In terms of biological role, obestatin may be the ligand for GPR39. May have an appetite-reducing effect resulting in decreased food intake. May reduce gastric emptying activity and jejunal motility. The sequence is that of Appetite-regulating hormone (Ghrl) from Rattus norvegicus (Rat).